The chain runs to 210 residues: Vacuolar protein sorting-associated protein 28 homolog (210 aa).

The VPS28 N-terminal domain occupies 1 to 106 (MSSQNANLMR…REGRPITVKD (106 aa)). A VPS28 C-terminal domain is found at 110 to 206 (NVLKHIASIV…AYQAFNKALN (97 aa)).

The protein belongs to the VPS28 family. Component of the ESCRT-I complex (endosomal sorting complex required for transport I). As to expression, expressed in embryos.

It localises to the endosome. Its function is as follows. Component of the ESCRT-I complex, a regulator of vesicular trafficking process. The protein is Vacuolar protein sorting-associated protein 28 homolog (vps-28) of Caenorhabditis elegans.